A 419-amino-acid chain; its full sequence is O-methyltransferase desB (419 aa).

S-adenosyl-L-methionine-binding positions include 255-256, Asp-280, 306-307, and Arg-323; these read GG and DF. His-326 functions as the Proton acceptor in the catalytic mechanism.

Belongs to the class I-like SAM-binding methyltransferase superfamily. Cation-independent O-methyltransferase family. S-adenosyl-L-methionine serves as cofactor.

The protein operates within secondary metabolite biosynthesis. Non-reducing polyketide synthase; part of the gene cluster that mediates the biosynthesis of the bicoumarin desertorin. The non-reducing polyketide synthase desS first catalyzes the formation of the pentaketidic 4,7-dihydroxy-5-methylcoumarin from acetyl coenzyme A and 4 malonyl coenzyme A molecules. Further O-methylation by desB leads to the formation of 7-demethylsiderin. Then, an oxidative phenol coupling catalyzed by the cytochrome P450 monooxygenase desC forms the 6,8'-dimer M-desertorin A via dimerization the monomeric precursor, 7-demethylsiderin. M-desertorin A is further converted to M-desertorin C. The polypeptide is O-methyltransferase desB (Aspergillus desertorum (Emericella desertorum)).